The primary structure comprises 670 residues: Acetolactate synthase, chloroplastic (670 aa).

Composition is skewed to low complexity over residues 1–48 (MAAA…SSSS) and 55–77 (KSSSPSSISAVLNTTTNVTTTPS). A chloroplast-targeting transit peptide spans 1–55 (MAAATTTTTTSSSISFSTKPSPSSSKSPLPISRFSLPFSLNPNKSSSSSRRRGIK). The segment at 1 to 94 (MAAATTTTTT…ETFISRFAPD (94 aa)) is disordered. Glutamate 144 serves as a coordination point for thiamine diphosphate. Serine 186 contributes to the FAD binding site. Glutamine 207 contributes to the thiamine diphosphate binding site. The (R)-imazaquin site is built by lysine 220 and arginine 246. Arginine 246 lines the FAD pocket. Residue lysine 256 participates in chlorimuron-ethyl binding. FAD contacts are provided by residues glycine 308 and 331-332 (TL). Position 340 is a cysteine sulfinic acid (-SO2H) (cysteine 340). FAD-binding positions include 349 to 352 (LGMH) and 371 to 375 (GVRFD). Position 376-377 (376-377 (DR)) interacts with chlorimuron-ethyl. FAD is bound by residues 395–396 (DI) and 414–415 (DV). Residues 414-446 (DVKLALQGMNKVLENRAEELKLDFGVWRNELNV) are a coiled coil. Position 487 to 488 (487 to 488 (QH)) interacts with thiamine diphosphate. An FAD-binding site is contributed by 508 to 509 (GG). Thiamine diphosphate contacts are provided by residues 511-513 (GAM), 538-540 (DGS), and 565-570 (NQHLGM). Residues aspartate 538, asparagine 565, and histidine 567 each coordinate Mg(2+). Chlorimuron-ethyl is bound by residues tryptophan 574 and serine 653.

Belongs to the TPP enzyme family. As to quaternary structure, homodimer or homotetramer. The acetolactate synthase complex contains both large catalytic subunits and small regulatory subunits. Homodimer. The acetolactate synthase complex contains 4 homodimers of the large catalytic subunits, and 1 homotetramer of the small regulatory subunits. Mg(2+) serves as cofactor. Requires FAD as cofactor. It depends on thiamine diphosphate as a cofactor.

It localises to the plastid. It is found in the chloroplast. It catalyses the reaction 2 pyruvate + H(+) = (2S)-2-acetolactate + CO2. Its pathway is amino-acid biosynthesis; L-isoleucine biosynthesis; L-isoleucine from 2-oxobutanoate: step 1/4. It participates in amino-acid biosynthesis; L-valine biosynthesis; L-valine from pyruvate: step 1/4. Its activity is regulated as follows. Inhibited by asymmetric aryl disulfides, triazolopyrimidine sulfonanilide compounds, isatin derivatives, and sulfonylurea and imidazolinone herbicides. Insensitive to feed-back inhibition by branched-chain amino acids. Its function is as follows. Catalyzes the formation of acetolactate from pyruvate, the first step in valine and isoleucine biosynthesis. This Arabidopsis thaliana (Mouse-ear cress) protein is Acetolactate synthase, chloroplastic (ALS).